Consider the following 73-residue polypeptide: Metallothionein-like protein type 2 (73 aa).

It belongs to the metallothionein superfamily. Type 15 family.

In terms of biological role, metallothioneins have a high content of cysteine residues that bind various heavy metals. In Solanum lycopersicum (Tomato), this protein is Metallothionein-like protein type 2.